The sequence spans 247 residues: Probable transcriptional regulatory protein Gura_1416 (247 aa).

It belongs to the TACO1 family.

It is found in the cytoplasm. This Geotalea uraniireducens (strain Rf4) (Geobacter uraniireducens) protein is Probable transcriptional regulatory protein Gura_1416.